The primary structure comprises 68 residues: Large ribosomal subunit protein uL29 (68 aa).

The protein belongs to the universal ribosomal protein uL29 family.

This chain is Large ribosomal subunit protein uL29, found in Picosynechococcus sp. (strain ATCC 27264 / PCC 7002 / PR-6) (Agmenellum quadruplicatum).